The following is a 258-amino-acid chain: MMNPLVIKLGGVLLDSEEALERLFTALVTYREKHERPLVIMHGGGCLVDELMKRLALPVVKKNGLRVTPADQIDIITGALAGTANKTLLAWAVKHQINAVGLCLADGNTVTVTLLDAELGHVGKAQPGSAALVQTLLAAGYMPIISSIGITVEGQLMNVNADQAATALAATLGADLILLSDVSGILDGKGQRIAEMTAQKAEQLIAQGIITDGMVVKVNAALDAARSLGRPVDIASWRHSEQLPALFNGVPIGTRISV.

Residues Gly-44–Gly-45, Arg-66, and Asn-158 contribute to the substrate site. ATP contacts are provided by residues Asp-181–Leu-186 and Ile-209–Thr-211.

Belongs to the acetylglutamate kinase family. ArgB subfamily. Homodimer.

Its subcellular location is the cytoplasm. It catalyses the reaction N-acetyl-L-glutamate + ATP = N-acetyl-L-glutamyl 5-phosphate + ADP. It functions in the pathway amino-acid biosynthesis; L-arginine biosynthesis; N(2)-acetyl-L-ornithine from L-glutamate: step 2/4. Functionally, catalyzes the ATP-dependent phosphorylation of N-acetyl-L-glutamate. The chain is Acetylglutamate kinase from Yersinia pestis bv. Antiqua (strain Antiqua).